The following is a 381-amino-acid chain: Putative glycosyltransferase EpsD (381 aa).

It belongs to the glycosyltransferase group 1 family. Glycosyltransferase 4 subfamily.

Its function is as follows. May be involved in the production of the exopolysaccharide (EPS) component of the extracellular matrix during biofilm formation. EPS is responsible for the adhesion of chains of cells into bundles. Required for biofilm maintenance. The protein is Putative glycosyltransferase EpsD (epsD) of Bacillus subtilis (strain 168).